Reading from the N-terminus, the 680-residue chain is MTDDRFVVSAPYRPTGDQPRAIAQLSAGALGGVTFQTLLGATGTGKTFTIANVIEKVGKPTLVLAHNKTLAAQLCNELREFFPDNAVEYFVSYYDYYQPEAYIPQTDTYIEKSASINDEIDMLRHSATRSLFERRDVIVVASVSCIYGLGMPEEYLRAAIPLKVGSNIDQRELLRQLVTVQYERNDIDLGRGRFRVRGDVVEIGPAYEDRIIRVEFFGDEVEAVRWLDPVTGEVVRSVNSLNIYPAKHFVTPEEQLEQACIAIEQELEARVAELEGENKLLEAQRIKQRTRYDLEMLREVGYCNGVENYSRHLAARRPGEAPSCLIDYFPQDWLLVVDESHVTIPQIRGMYNGDAQRKKVLIDHGFRLPSAADNRPLKAPEFWDKVRQAIFVSATPGDWEVELSGGGRDPETGRMAGEHVAEQIIRPTGVLDPEVFVRPVAGQVDDLLHEIHDRVARRERVLVTTLTKRMAEDLTEYFQERGVKVRYLHSEIQAIERIEILQALRQGDFDVLIGVNLLREGLDLPEVSLVAILDADKEGFLRAERSLIQTIGRAARHVRGQVIMYADRLTASMDKAISETERRRQIQRAYNAAHGLTPQPIVKRLDANSILDYLAVSRRLNQQELEAAAAAPAEVALADIPELVSQLEIQMRDAAKKLEFEKAAEYRDKIHKLRERLLGK.

A Helicase ATP-binding domain is found at 27-422 (AGALGGVTFQ…GRMAGEHVAE (396 aa)). 40 to 47 (GATGTGKT) is an ATP binding site. Residues 93-116 (YYDYYQPEAYIPQTDTYIEKSASI) carry the Beta-hairpin motif. One can recognise a Helicase C-terminal domain in the interval 443–609 (QVDDLLHEIH…PIVKRLDANS (167 aa)). A UVR domain is found at 641-676 (PELVSQLEIQMRDAAKKLEFEKAAEYRDKIHKLRER).

Belongs to the UvrB family. Forms a heterotetramer with UvrA during the search for lesions. Interacts with UvrC in an incision complex.

It is found in the cytoplasm. The UvrABC repair system catalyzes the recognition and processing of DNA lesions. A damage recognition complex composed of 2 UvrA and 2 UvrB subunits scans DNA for abnormalities. Upon binding of the UvrA(2)B(2) complex to a putative damaged site, the DNA wraps around one UvrB monomer. DNA wrap is dependent on ATP binding by UvrB and probably causes local melting of the DNA helix, facilitating insertion of UvrB beta-hairpin between the DNA strands. Then UvrB probes one DNA strand for the presence of a lesion. If a lesion is found the UvrA subunits dissociate and the UvrB-DNA preincision complex is formed. This complex is subsequently bound by UvrC and the second UvrB is released. If no lesion is found, the DNA wraps around the other UvrB subunit that will check the other stand for damage. This chain is UvrABC system protein B, found in Gloeobacter violaceus (strain ATCC 29082 / PCC 7421).